The chain runs to 134 residues: MKIALIAHDRKKDNLVQFAIAYKEILLEHSLYATGTTGQRVIEATGLEVTRFRSGPLGGDQQIGAMIANNDMDMVIFFRDPLTAQPHEPDVSALIRLCDVYQVPLATNMGTAEILLKGLQEGFVDWRLIQERRN.

Residues 1 to 134 form the MGS-like domain; that stretch reads MKIALIAHDR…DWRLIQERRN (134 aa). Residues His8, Lys12, 34-37, and 54-55 contribute to the substrate site; these read TGTT and SG. Residue Asp60 is the Proton donor/acceptor of the active site. A substrate-binding site is contributed by His87.

This sequence belongs to the methylglyoxal synthase family.

It catalyses the reaction dihydroxyacetone phosphate = methylglyoxal + phosphate. Catalyzes the formation of methylglyoxal from dihydroxyacetone phosphate. The protein is Methylglyoxal synthase of Lysinibacillus sphaericus (strain C3-41).